The primary structure comprises 456 residues: Bifunctional protein GlmU (456 aa).

The segment at 1–229 (MLNSAMSVVI…ISETDGVNNR (229 aa)) is pyrophosphorylase. UDP-N-acetyl-alpha-D-glucosamine is bound by residues 11–14 (LAAG), Lys25, Gln76, 81–82 (GT), 103–105 (YGD), Gly140, Glu154, Asn169, and Asn227. Asp105 contributes to the Mg(2+) binding site. Asn227 provides a ligand contact to Mg(2+). The linker stretch occupies residues 230-250 (LQLSRLERIYQAEQAEKLLLS). Residues 251 to 456 (GVMLRDPARF…QGWQRPVKKK (206 aa)) are N-acetyltransferase. UDP-N-acetyl-alpha-D-glucosamine is bound by residues Arg333 and Lys351. His363 serves as the catalytic Proton acceptor. UDP-N-acetyl-alpha-D-glucosamine-binding residues include Tyr366 and Asn377. Residues Ala380, 386–387 (NY), Ser405, Ala423, and Arg440 contribute to the acetyl-CoA site.

It in the N-terminal section; belongs to the N-acetylglucosamine-1-phosphate uridyltransferase family. The protein in the C-terminal section; belongs to the transferase hexapeptide repeat family. Homotrimer. It depends on Mg(2+) as a cofactor.

Its subcellular location is the cytoplasm. It catalyses the reaction alpha-D-glucosamine 1-phosphate + acetyl-CoA = N-acetyl-alpha-D-glucosamine 1-phosphate + CoA + H(+). The enzyme catalyses N-acetyl-alpha-D-glucosamine 1-phosphate + UTP + H(+) = UDP-N-acetyl-alpha-D-glucosamine + diphosphate. Its pathway is nucleotide-sugar biosynthesis; UDP-N-acetyl-alpha-D-glucosamine biosynthesis; N-acetyl-alpha-D-glucosamine 1-phosphate from alpha-D-glucosamine 6-phosphate (route II): step 2/2. The protein operates within nucleotide-sugar biosynthesis; UDP-N-acetyl-alpha-D-glucosamine biosynthesis; UDP-N-acetyl-alpha-D-glucosamine from N-acetyl-alpha-D-glucosamine 1-phosphate: step 1/1. It functions in the pathway bacterial outer membrane biogenesis; LPS lipid A biosynthesis. In terms of biological role, catalyzes the last two sequential reactions in the de novo biosynthetic pathway for UDP-N-acetylglucosamine (UDP-GlcNAc). The C-terminal domain catalyzes the transfer of acetyl group from acetyl coenzyme A to glucosamine-1-phosphate (GlcN-1-P) to produce N-acetylglucosamine-1-phosphate (GlcNAc-1-P), which is converted into UDP-GlcNAc by the transfer of uridine 5-monophosphate (from uridine 5-triphosphate), a reaction catalyzed by the N-terminal domain. In Salmonella agona (strain SL483), this protein is Bifunctional protein GlmU.